A 263-amino-acid polypeptide reads, in one-letter code: Indole-3-glycerol phosphate synthase (263 aa).

The protein belongs to the TrpC family.

The catalysed reaction is 1-(2-carboxyphenylamino)-1-deoxy-D-ribulose 5-phosphate + H(+) = (1S,2R)-1-C-(indol-3-yl)glycerol 3-phosphate + CO2 + H2O. Its pathway is amino-acid biosynthesis; L-tryptophan biosynthesis; L-tryptophan from chorismate: step 4/5. The protein is Indole-3-glycerol phosphate synthase of Desulfosudis oleivorans (strain DSM 6200 / JCM 39069 / Hxd3) (Desulfococcus oleovorans).